Consider the following 95-residue polypeptide: Large ribosomal subunit protein bL25 (95 aa).

This sequence belongs to the bacterial ribosomal protein bL25 family. As to quaternary structure, part of the 50S ribosomal subunit; part of the 5S rRNA/L5/L18/L25 subcomplex. Contacts the 5S rRNA. Binds to the 5S rRNA independently of L5 and L18.

This is one of the proteins that binds to the 5S RNA in the ribosome where it forms part of the central protuberance. The polypeptide is Large ribosomal subunit protein bL25 (Shewanella pealeana (strain ATCC 700345 / ANG-SQ1)).